The chain runs to 437 residues: Putative O-antigen export protein (437 aa).

The next 12 membrane-spanning stretches (helical) occupy residues 3–23, 41–61, 81–101, 129–149, 152–172, 185–205, 231–251, 269–289, 310–330, 332–352, 375–395, and 398–418; these read VPTH…SIFI, AVFT…FGLG, LVLS…ILIL, VASF…IWFS, KGWV…VFLM, IIFS…ISTL, GGFF…YIVM, TFGL…PVCA, FGFI…DFIV, ILAP…FSFY, LWIS…VGAV, and GLVG…SWWL.

The protein localises to the cell inner membrane. It participates in bacterial outer membrane biogenesis; LPS O-antigen biosynthesis. In terms of biological role, may be involved in the translocation process of the nascent O-polysaccharide molecules and/or its ligation to lipid A core units. The chain is Putative O-antigen export protein (rfbX) from Yersinia pseudotuberculosis.